Consider the following 671-residue polypeptide: DNA ligase (671 aa).

NAD(+)-binding positions include 35-39 (DQQYD), 84-85 (SL), and Glu113. Lys115 (N6-AMP-lysine intermediate) is an active-site residue. NAD(+)-binding residues include Arg136, Glu170, Lys285, and Lys309. 4 residues coordinate Zn(2+): Cys403, Cys406, Cys421, and Cys426. The 84-residue stretch at 588 to 671 (TTQTIFTNKK…QIIENSQIKL (84 aa)) folds into the BRCT domain.

Belongs to the NAD-dependent DNA ligase family. LigA subfamily. Mg(2+) is required as a cofactor. The cofactor is Mn(2+).

The catalysed reaction is NAD(+) + (deoxyribonucleotide)n-3'-hydroxyl + 5'-phospho-(deoxyribonucleotide)m = (deoxyribonucleotide)n+m + AMP + beta-nicotinamide D-nucleotide.. Functionally, DNA ligase that catalyzes the formation of phosphodiester linkages between 5'-phosphoryl and 3'-hydroxyl groups in double-stranded DNA using NAD as a coenzyme and as the energy source for the reaction. It is essential for DNA replication and repair of damaged DNA. The sequence is that of DNA ligase from Onion yellows phytoplasma (strain OY-M).